The chain runs to 242 residues: Probable transcriptional regulatory protein BTH_I1015 (242 aa).

Belongs to the TACO1 family.

The protein resides in the cytoplasm. The chain is Probable transcriptional regulatory protein BTH_I1015 from Burkholderia thailandensis (strain ATCC 700388 / DSM 13276 / CCUG 48851 / CIP 106301 / E264).